The primary structure comprises 115 residues: OV39 antigen (115 aa).

The polypeptide is OV39 antigen (OV39) (Onchocerca volvulus).